Here is a 444-residue protein sequence, read N- to C-terminus: Lycopaoctaene synthase (444 aa).

R48 and R73 together coordinate NADP(+). Mg(2+) is bound by residues D76, E79, and D80. 3 residues coordinate NADP(+): R215, K315, and R317. 2 helical membrane passes run 391-411 and 415-435; these read TAMV…AYVY and GTSL…IGLF.

The protein belongs to the phytoene/squalene synthase family. It depends on Mg(2+) as a cofactor.

The protein resides in the membrane. It catalyses the reaction 2 (2E,6E)-farnesyl diphosphate + NADH + H(+) = squalene + 2 diphosphate + NAD(+). The enzyme catalyses 2 (2E,6E)-farnesyl diphosphate + NADPH + H(+) = squalene + 2 diphosphate + NADP(+). It carries out the reaction 2 (2E,6E,10E)-geranylgeranyl diphosphate + NADPH + H(+) = all-trans-lycopaoctaene + 2 diphosphate + NADP(+). Functionally, converts the C20 geranylgeranyl diphosphate (GGPP) to the C40 lycopaoctaene, the first committed intermediate in the production of lycopadiene. Converts farnesyl diphosphate (FPP) into squalene, a precursor for sterol biosynthesis in eukaryotes. Converts with low efficiency the C20 phytyl diphosphate (PPP) to the C40 lycopadiene in vitro. This reaction may not have biological significance in vivo. The chain is Lycopaoctaene synthase from Botryococcus braunii (Green alga).